Here is a 116-residue protein sequence, read N- to C-terminus: MTDKKVIRLRRARKARLKMHELEVVRLCVFRSSQHIYAQVISADGSKVLASASTLDKDLRDGATGNIDAATKVGKLVAERAKAAGVSQVAFDRSGFKYHGRVKALADAAREGGLEF.

It belongs to the universal ribosomal protein uL18 family. Part of the 50S ribosomal subunit; part of the 5S rRNA/L5/L18/L25 subcomplex. Contacts the 5S and 23S rRNAs.

Its function is as follows. This is one of the proteins that bind and probably mediate the attachment of the 5S RNA into the large ribosomal subunit, where it forms part of the central protuberance. This Pseudomonas putida (strain GB-1) protein is Large ribosomal subunit protein uL18.